A 184-amino-acid polypeptide reads, in one-letter code: Ribosome-recycling factor (184 aa).

It belongs to the RRF family.

It localises to the cytoplasm. Its function is as follows. Responsible for the release of ribosomes from messenger RNA at the termination of protein biosynthesis. May increase the efficiency of translation by recycling ribosomes from one round of translation to another. The polypeptide is Ribosome-recycling factor (Desulfotalea psychrophila (strain LSv54 / DSM 12343)).